Consider the following 615-residue polypeptide: Proteasome-associated ATPase (615 aa).

Residues 1–13 (MSESQRHEAREDG) show a composition bias toward basic and acidic residues. The tract at residues 1–32 (MSESQRHEAREDGFTTPHESGLSSEDAAELEE) is disordered. Positions 22 to 100 (LSSEDAAELE…LREEVDRLGQ (79 aa)) form a coiled coil. 302-307 (GCGKTL) is an ATP binding site. A docks into pockets in the proteasome alpha-ring region spans residues 614 to 615 (YL).

Belongs to the AAA ATPase family. As to quaternary structure, homohexamer. Assembles into a hexameric ring structure that caps the 20S proteasome core. Strongly interacts with the prokaryotic ubiquitin-like protein Pup through a hydrophobic interface; the interacting region of ARC lies in its N-terminal coiled-coil domain. There is one Pup binding site per ARC hexamer ring. Upon ATP-binding, the C-terminus of ARC interacts with the alpha-rings of the proteasome core, possibly by binding to the intersubunit pockets.

Its pathway is protein degradation; proteasomal Pup-dependent pathway. ATPase which is responsible for recognizing, binding, unfolding and translocation of pupylated proteins into the bacterial 20S proteasome core particle. May be essential for opening the gate of the 20S proteasome via an interaction with its C-terminus, thereby allowing substrate entry and access to the site of proteolysis. Thus, the C-termini of the proteasomal ATPase may function like a 'key in a lock' to induce gate opening and therefore regulate proteolysis. The chain is Proteasome-associated ATPase from Mycobacterium sp. (strain JLS).